We begin with the raw amino-acid sequence, 403 residues long: Betaine--homocysteine S-methyltransferase 1 (403 aa).

Residues 8–311 enclose the Hcy-binding domain; the sequence is KGLLERLDAG…YHTRAIAEEL (304 aa). 3 residues coordinate Zn(2+): Cys-214, Cys-296, and Cys-297.

Homotetramer. It depends on Zn(2+) as a cofactor.

It is found in the cytoplasm. The enzyme catalyses L-homocysteine + glycine betaine = N,N-dimethylglycine + L-methionine. It participates in amine and polyamine degradation; betaine degradation; sarcosine from betaine: step 1/2. The protein operates within amino-acid biosynthesis; L-methionine biosynthesis via de novo pathway; L-methionine from L-homocysteine (BhmT route): step 1/1. In terms of biological role, involved in the regulation of homocysteine metabolism. Converts betaine and homocysteine to dimethylglycine and methionine, respectively. This reaction is also required for the irreversible oxidation of choline. This Xenopus laevis (African clawed frog) protein is Betaine--homocysteine S-methyltransferase 1 (bhmt).